The primary structure comprises 257 residues: Deoxyribose-phosphate aldolase (257 aa).

Aspartate 102 acts as the Proton donor/acceptor in catalysis. Lysine 166 functions as the Schiff-base intermediate with acetaldehyde in the catalytic mechanism. Lysine 198 acts as the Proton donor/acceptor in catalysis.

This sequence belongs to the DeoC/FbaB aldolase family. DeoC type 2 subfamily.

It localises to the cytoplasm. The catalysed reaction is 2-deoxy-D-ribose 5-phosphate = D-glyceraldehyde 3-phosphate + acetaldehyde. It functions in the pathway carbohydrate degradation; 2-deoxy-D-ribose 1-phosphate degradation; D-glyceraldehyde 3-phosphate and acetaldehyde from 2-deoxy-alpha-D-ribose 1-phosphate: step 2/2. Catalyzes a reversible aldol reaction between acetaldehyde and D-glyceraldehyde 3-phosphate to generate 2-deoxy-D-ribose 5-phosphate. The chain is Deoxyribose-phosphate aldolase from Aeromonas salmonicida (strain A449).